We begin with the raw amino-acid sequence, 581 residues long: uncharacterized protein (581 aa).

Ser28 is modified (phosphoserine). The next 11 membrane-spanning stretches (helical) occupy residues 61–81 (LVLICLVSLVTGAIANDAGSA), 100–120 (AGVLFICVGYFTYLAMPATFL), 125–145 (CVYLVCLLFGMLGSMWFALVK), 187–207 (IYILSTSVGTYLGPLAAGYIA), 214–234 (WIGWWGLIISGITFVLFLFTF), 340–360 (IFLFPAVLYSGLQWGAQDAWL), 382–402 (AVAIMNVPCIIGATIGCIYGG), 426–446 (LWLMILPCIINPIGLFMFGIG), 458–478 (VGLGFIGFGWGCAGDISMAYL), 486–506 (VLEAMVGVSVINNTFGYVFTF), and 522–542 (ISIGVLCFIFIATSFPMILCG).

It belongs to the major facilitator superfamily.

It localises to the cytoplasm. The protein localises to the cell cortex. The protein resides in the membrane. This is an uncharacterized protein from Schizosaccharomyces pombe (strain 972 / ATCC 24843) (Fission yeast).